We begin with the raw amino-acid sequence, 391 residues long: 3-ketoacyl-CoA thiolase (391 aa).

C95 acts as the Acyl-thioester intermediate in catalysis. Active-site proton acceptor residues include H347 and C377.

Belongs to the thiolase-like superfamily. Thiolase family. In terms of assembly, heterotetramer of two alpha chains (FadB) and two beta chains (FadA).

The protein localises to the cytoplasm. It carries out the reaction an acyl-CoA + acetyl-CoA = a 3-oxoacyl-CoA + CoA. Its pathway is lipid metabolism; fatty acid beta-oxidation. Catalyzes the final step of fatty acid oxidation in which acetyl-CoA is released and the CoA ester of a fatty acid two carbons shorter is formed. In Ectopseudomonas oleovorans (Pseudomonas oleovorans), this protein is 3-ketoacyl-CoA thiolase.